Here is a 512-residue protein sequence, read N- to C-terminus: MRSKSSEGDLQPEDTQSREDKETTATYSEDTKPETQKERNAALDNLAKTPIQLVVQPTPLTPAITPCEAPPPPPPPKPSSDNNNSKRLKVKDQLIEVPSDEVGRVENNIDNFPFYHGFMGRNECEAMLSNHGDFLIRMTEIGKRVAYVISIKWKYQNIHVLVKRTKTKKLYWTKKYAFKSICELIAYHKRNHKPIYEGMTLICGLARHGWQLNNEQVTLNKKLGEGQFGEVHKGSLKTSVFAAPVTVAVKTLHQNHLSANEKILFLREANVMLTLSHPNVIKFYGVCTMKEPIMIVMEFCDGKSLEDALLSKEEKVSAEDKILYLFHAACGIDYLHGKQVIHRDIAARNCLLNSKKILKISDFGLSVKGVAIKERKGGCLPVKYMAPETLKKGLYSTASDIYSYGALMYEVYTDGKTPFETCGLRGNELRKAIIGKRISLAVEVELPVFIANIFEQSRQYETEDRISSKQIIQIFKEEVGFHEIETSGILHKLVNSLPRIHNKERKPAAVAV.

Residues 1–85 (MRSKSSEGDL…PKPSSDNNNS (85 aa)) are disordered. The segment covering 15-41 (TQSREDKETTATYSEDTKPETQKERNA) has biased composition (basic and acidic residues). A compositionally biased stretch (pro residues) spans 68–78 (EAPPPPPPPKP). The SH2 domain occupies 114 to 205 (FYHGFMGRNE…YEGMTLICGL (92 aa)). The region spanning 217–485 (VTLNKKLGEG…KEEVGFHEIE (269 aa)) is the Protein kinase domain. ATP is bound by residues 223–231 (LGEGQFGEV) and K250. Residue D344 is the Proton acceptor of the active site.

The protein belongs to the protein kinase superfamily. Tyr protein kinase family. Fes/fps subfamily. In terms of tissue distribution, expression is restricted to male germline.

Its subcellular location is the cell membrane. The protein localises to the cytoplasm. It catalyses the reaction L-tyrosyl-[protein] + ATP = O-phospho-L-tyrosyl-[protein] + ADP + H(+). Probable non-receptor tyrosine-protein kinase which plays a role in spermatid activation (spermiogenesis) in hermaphrodites. This Caenorhabditis elegans protein is Spermatocyte protein spe-8.